Reading from the N-terminus, the 173-residue chain is MDVSKISPGKDLPNDINVVIEIPQGSQVKYEVDKDSGALVVDRFLFTPMAYPAAYGFIPGTLAADGDPADALVLTPAAVVPGSVIRARPIGMLKMEDESGQDEKIICVPHDKVHPQFSNVHSVDDLPEITKKAITHFFERYKDLEPNKWVKVTGWADKAEAGKVIMEALAAAK.

Substrate-binding residues include lysine 29, arginine 43, and tyrosine 55. Mg(2+) contacts are provided by aspartate 65, aspartate 70, and aspartate 102. Tyrosine 141 serves as a coordination point for substrate.

It belongs to the PPase family. Homohexamer. It depends on Mg(2+) as a cofactor.

The protein localises to the cytoplasm. The catalysed reaction is diphosphate + H2O = 2 phosphate + H(+). Functionally, catalyzes the hydrolysis of inorganic pyrophosphate (PPi) forming two phosphate ions. The chain is Inorganic pyrophosphatase from Gluconobacter oxydans (strain 621H) (Gluconobacter suboxydans).